A 260-amino-acid polypeptide reads, in one-letter code: UPF0246 protein Bcep1808_2308 (260 aa).

This sequence belongs to the UPF0246 family.

This chain is UPF0246 protein Bcep1808_2308, found in Burkholderia vietnamiensis (strain G4 / LMG 22486) (Burkholderia cepacia (strain R1808)).